A 203-amino-acid chain; its full sequence is MKTPASLESLITALRVLPGVGPKTAQRMAYHLMQRDPGGADRLARAIDHARSHLKHCARCNTFSETELCVLCADDQRRQDVLCVVEMPADALMIEQTHSYDGLYFVLMGKVSPLDGLTARDIPLEQLARRALDGTVNEVILATNFTAEGEATAHVLATLFKDRGLSVSRIARGLPVGGELEHVDAGTLAQALYERRRLSTGDA.

A C4-type zinc finger spans residues 57–72; it reads CARCNTFSETELCVLC. Positions 80-175 constitute a Toprim domain; that stretch reads DVLCVVEMPA…SVSRIARGLP (96 aa).

It belongs to the RecR family.

May play a role in DNA repair. It seems to be involved in an RecBC-independent recombinational process of DNA repair. It may act with RecF and RecO. The sequence is that of Recombination protein RecR from Laribacter hongkongensis (strain HLHK9).